The primary structure comprises 114 residues: Notch-regulated ankyrin repeat-containing protein (114 aa).

2 ANK repeats span residues 50–79 (EGQT…DIRL) and 83–112 (DGWS…YSSS).

It belongs to the NRARP family. Forms a ternary complex with the intracellular domain (ICD) of notch1 and rbpj/suh.

Promotes loss of intracellular domain (ICD) of Notch1 in embryos. By down-regulating ICD levels, could function as a negative feedback regulator of Notch signaling that attenuates ICD-mediated transcription. Involved in angiogenesis. May be involved in somitogenesis. The polypeptide is Notch-regulated ankyrin repeat-containing protein (nrarp) (Xenopus laevis (African clawed frog)).